Here is a 96-residue protein sequence, read N- to C-terminus: Large ribosomal subunit protein bL27 (96 aa).

A propeptide spanning residues 1 to 9 (MLRLDLQFF) is cleaved from the precursor. The interval 13 to 35 (KGVGSTKNGRDSQSKRLGAKRAD) is disordered.

Belongs to the bacterial ribosomal protein bL27 family. In terms of processing, the N-terminus is cleaved by ribosomal processing cysteine protease Prp.

This Bacillus cereus (strain B4264) protein is Large ribosomal subunit protein bL27.